A 359-amino-acid chain; its full sequence is tRNA-specific 2-thiouridylase MnmA (359 aa).

ATP contacts are provided by residues 7-14 and Met33; that span reads AMSGGVDS. Cys101 acts as the Nucleophile in catalysis. Cys101 and Cys198 form a disulfide bridge. Position 125 (Gly125) interacts with ATP. The tract at residues 148–150 is interaction with tRNA; that stretch reads KDQ. Cys198 acts as the Cysteine persulfide intermediate in catalysis.

It belongs to the MnmA/TRMU family.

The protein localises to the cytoplasm. It carries out the reaction S-sulfanyl-L-cysteinyl-[protein] + uridine(34) in tRNA + AH2 + ATP = 2-thiouridine(34) in tRNA + L-cysteinyl-[protein] + A + AMP + diphosphate + H(+). In terms of biological role, catalyzes the 2-thiolation of uridine at the wobble position (U34) of tRNA, leading to the formation of s(2)U34. The sequence is that of tRNA-specific 2-thiouridylase MnmA from Chloroflexus aurantiacus (strain ATCC 29366 / DSM 635 / J-10-fl).